The following is a 544-amino-acid chain: Prolyl 4-hydroxylase subunit alpha-3 (544 aa).

The signal sequence occupies residues 1-24; the sequence is MGPGARLAALLVLLKLGVGDPAAA. The stretch at 227–260 is one TPR repeat; that stretch reads EDALDYLAFACYQVGNVSCALSLSREFLVYSPDN. Residue Asn242 is glycosylated (N-linked (GlcNAc...) asparagine). The region spanning 422–529 is the Fe2OG dioxygenase domain; it reads YAEYLQVVNY…KWVANKWIHE (108 aa). Residues His440 and Asp442 each coordinate Fe cation. N-linked (GlcNAc...) asparagine glycosylation occurs at Asn482. His510 lines the Fe cation pocket. Lys520 is a 2-oxoglutarate binding site.

It belongs to the P4HA family. In terms of assembly, heterotetramer of two alpha-3 chains and two beta chains (the beta chain is the multi-functional PDI). Requires Fe(2+) as cofactor. It depends on L-ascorbate as a cofactor. N-glycosylation plays no role in the catalytic activity.

It localises to the endoplasmic reticulum lumen. It carries out the reaction L-prolyl-[collagen] + 2-oxoglutarate + O2 = trans-4-hydroxy-L-prolyl-[collagen] + succinate + CO2. Functionally, catalyzes the post-translational formation of 4-hydroxyproline in -Xaa-Pro-Gly- sequences in collagens and other proteins. The sequence is that of Prolyl 4-hydroxylase subunit alpha-3 (P4ha3) from Rattus norvegicus (Rat).